The sequence spans 300 residues: Pantoate kinase (300 aa).

Belongs to the GHMP kinase family. PoK subfamily. Homodimer.

The catalysed reaction is (R)-pantoate + ATP = (R)-4-phosphopantoate + ADP + H(+). It participates in cofactor biosynthesis; coenzyme A biosynthesis. Moderately stimulated in the presence of potassium cations. Inhibited by increasing concentrations of pantoate. Activity is not affected by CoA/acetyl-CoA. Functionally, phosphorylates (R)-pantoate to form (R)-4-phosphopantoate in the CoA biosynthesis pathway. Displays broad nucleotide specificity and utilizes ATP, GTP, UTP, and CTP with comparable catalytic efficiencies. In Thermococcus kodakarensis (strain ATCC BAA-918 / JCM 12380 / KOD1) (Pyrococcus kodakaraensis (strain KOD1)), this protein is Pantoate kinase.